The sequence spans 118 residues: MSCQQSQQQCQPPPKCTPKCPPKCPTPKCPPKCPPKCPPVSSCCSVSSGGCCGSSSGGCCSSGGGGCCSSGGGGCCLSHHRRRRSHRHRPQSSDCCSQPSAGSSCCGGGSGQHSGGCC.

Positions 1–10 (MSCQQSQQQC) are enriched in low complexity. Disordered regions lie at residues 1–23 (MSCQQSQQQCQPPPKCTPKCPPK) and 82–118 (RRRSHRHRPQSSDCCSQPSAGSSCCGGGSGQHSGGCC). The segment covering 11–23 (QPPPKCTPKCPPK) has biased composition (pro residues). Positions 95–104 (CCSQPSAGSS) are enriched in low complexity. Residues 105–118 (CCGGGSGQHSGGCC) show a composition bias toward gly residues.

Belongs to the LCE family. As to expression, skin-specific. Expression was readily detected in adult trunk skin, adult arm skin, fetal skin, penal skin, vulva, esophagus and tongue. Not expressed in the cervix, rectum, lung, colon, or placenta. Expression is observed in the fibroblasts.

Precursors of the cornified envelope of the stratum corneum. In Homo sapiens (Human), this protein is Late cornified envelope protein 1F (LCE1F).